The chain runs to 249 residues: AA9 family lytic polysaccharide monooxygenase A (249 aa).

A signal peptide spans 1-21 (MALSKIAALSTILASASLVAG). H22 contributes to the Cu(2+) binding site. H22 is modified (methylhistidine). N34 and N80 each carry an N-linked (GlcNAc...) asparagine glycan. Intrachain disulfides connect C77-C199 and C118-C122. H107 is a Cu(2+) binding site. H185 and Q194 together coordinate O2. Y196 is a binding site for Cu(2+).

The protein belongs to the polysaccharide monooxygenase AA9 family. It depends on Cu(2+) as a cofactor. In terms of processing, the catalytically essential N-terminal histidine His-22 is post-translationally modified by methylation to prevent protonation of the histidine side chain, and protect the critical active site of the enzyme from oxidative damage.

The protein resides in the secreted. The catalysed reaction is [(1-&gt;4)-beta-D-glucosyl]n+m + reduced acceptor + O2 = 4-dehydro-beta-D-glucosyl-[(1-&gt;4)-beta-D-glucosyl]n-1 + [(1-&gt;4)-beta-D-glucosyl]m + acceptor + H2O.. Its function is as follows. Lytic polysaccharide monooxygenase (LPMO) that exhibits a mixed C1/C4 oxidative cleavage activity on cellulose and xyloglucan. Catalysis by LPMOs requires the reduction of the active-site copper from Cu(II) to Cu(I) by a reducing agent and H(2)O(2) or O(2) as a cosubstrate. Shows a higher boosting effect with cellulases on the enzymatic saccharification of complex lignocellulosic substrates associated with xyloglucan than on the lignocellulosic substrates without xyloglucan. The oxidative cleavage of xyloglucan by LPMO9A may facilitate to open up the sterical hindrance of cellulose by xyloglucan and thereby increase accessibility for cellulase to lignocellulosic substrates. This is AA9 family lytic polysaccharide monooxygenase A from Penicillium parvum (Eupenicillium parvum).